Here is a 711-residue protein sequence, read N- to C-terminus: Far upstream element-binding protein 2 (711 aa).

Residues 1 to 147 (MSDYSTGGPP…HPPPRTSMTE (147 aa)) are disordered. N-acetylserine is present on Ser2. The segment covering 8 to 17 (GPPPGPPPPA) has biased composition (pro residues). Gly residues-rich tracts occupy residues 18-28 (GGGGGAGGAGG) and 36-68 (GAGD…GGPG). An Omega-N-methylarginine modification is found at Arg40. Lys87 carries the N6-acetyllysine modification. A Phosphoserine modification is found at Ser99. Phosphothreonine is present on Thr100. Over residues 110–122 (RQLEDGDQPESKK) the composition is skewed to basic and acidic residues. Residue Lys121 forms a Glycyl lysine isopeptide (Lys-Gly) (interchain with G-Cter in SUMO1); alternate linkage. Lys121 participates in a covalent cross-link: Glycyl lysine isopeptide (Lys-Gly) (interchain with G-Cter in SUMO2); alternate. A phosphoserine mark is found at Ser125, Ser129, Ser131, Ser181, Ser184, Ser193, and Ser274. KH domains are found at residues 144–208 (SMTE…KMML), 233–299 (GTVQ…CEMV), and 322–386 (GGGI…ARII). The interval 392–429 (SLRSGPPGPPGGPGMPPGGRGRGRGQGNWGPPGGEMTF) is disordered. Residues 397–407 (PPGPPGGPGMP) show a composition bias toward pro residues. A compositionally biased stretch (gly residues) spans 408–424 (PGGRGRGRGQGNWGPPG). 4 positions are modified to omega-N-methylarginine: Arg411, Arg413, Arg415, and Arg442. One can recognise a KH 4 domain in the interval 424 to 491 (GGEMTFSIPT…QQIDHAKQLI (68 aa)). Residue Ser480 is modified to Phosphoserine. The disordered stretch occupies residues 497 to 569 (GPLCPVGPGP…HDPSKAAAAA (73 aa)). Pro residues-rich tracts occupy residues 501–520 (PVGP…PFNP) and 528–542 (PGAP…PHQY). Repeat unit 1 spans residues 571 to 582 (DPNAAWAAYYSH). The 4 X 12 AA imperfect repeats stretch occupies residues 571 to 684 (DPNAAWAAYY…SAAWAEYYRQ (114 aa)). Residues 583-711 (YYQQPPGPVP…PTQQGQQQAQ (129 aa)) form a disordered region. Pro residues predominate over residues 587 to 613 (PPGPVPGPAPAPAAPPAQGEPPQPPPT). A run of 3 repeats spans residues 617–628 (DYTKAWEEYYKK), 643–654 (DYTKAWEEYYKK), and 673–684 (DYSAAWAEYYRQ).

This sequence belongs to the KHSRP family. As to quaternary structure, part of a ternary complex containing FUBP2, PTBP1, PTBP2 and HNRPH1. Interacts with PARN. Interacts with PQBP1. Post-translationally, phosphorylation at Ser-193 leads to the unfolding of the unstable KH domain 1, creating a site for 14-3-3 YWHAZ binding, which promotes nuclear localization and impairs the RNA degradation function. As to expression, detected in neural and non-neural cell lines.

Its subcellular location is the nucleus. It is found in the cytoplasm. Functionally, binds to the dendritic targeting element and may play a role in mRNA trafficking. Part of a ternary complex that binds to the downstream control sequence (DCS) of the pre-mRNA. Mediates exon inclusion in transcripts that are subject to tissue-specific alternative splicing. May interact with single-stranded DNA from the far-upstream element (FUSE). May activate gene expression. Also involved in degradation of inherently unstable mRNAs that contain AU-rich elements (AREs) in their 3'-UTR, possibly by recruiting degradation machinery to ARE-containing mRNAs. The sequence is that of Far upstream element-binding protein 2 (KHSRP) from Homo sapiens (Human).